Here is a 70-residue protein sequence, read N- to C-terminus: Consomatin Mrc3 (70 aa).

Residues 1–22 (MQTAYWVMVMMMVWITAPLSEG) form the signal peptide. Positions 23 to 55 (GKLNDVIRGLVPDDVTPKRILQSLISRRRFDGR) are excised as a propeptide. An intrachain disulfide couples cysteine 62 to cysteine 67. Tryptophan 64 bears the D-tryptophan mark. Proline 68 bears the 4-hydroxyproline mark. Tyrosine 69 is modified (tyrosine amide).

Belongs to the conotoxin C superfamily. Consomatin family. Expressed by the venom duct.

The protein resides in the secreted. Its function is as follows. Moderately activates human somatostatin receptors (SSTR) with a preferential activation of SSTR1 and SSTR4. In vivo, does not cause behavioral changes in mice within a few minutes of intracranial injection, but causes a progressive loss of movement thereafter. Four to five hours after injection, mice recover, even with the highest dose tested. Shows antinociception and antihyperalgesia activities in two mouse models of acute pain, most probably by acting outside the central nervous system. In Conus mercator (Trader cone), this protein is Consomatin Mrc3.